Reading from the N-terminus, the 149-residue chain is D-aminoacyl-tRNA deacylase (149 aa).

A Gly-cisPro motif, important for rejection of L-amino acids motif is present at residues 137-138; the sequence is GP.

This sequence belongs to the DTD family. As to quaternary structure, homodimer.

It localises to the cytoplasm. It catalyses the reaction glycyl-tRNA(Ala) + H2O = tRNA(Ala) + glycine + H(+). It carries out the reaction a D-aminoacyl-tRNA + H2O = a tRNA + a D-alpha-amino acid + H(+). Functionally, an aminoacyl-tRNA editing enzyme that deacylates mischarged D-aminoacyl-tRNAs. Also deacylates mischarged glycyl-tRNA(Ala), protecting cells against glycine mischarging by AlaRS. Acts via tRNA-based rather than protein-based catalysis; rejects L-amino acids rather than detecting D-amino acids in the active site. By recycling D-aminoacyl-tRNA to D-amino acids and free tRNA molecules, this enzyme counteracts the toxicity associated with the formation of D-aminoacyl-tRNA entities in vivo and helps enforce protein L-homochirality. The chain is D-aminoacyl-tRNA deacylase from Caldicellulosiruptor bescii (strain ATCC BAA-1888 / DSM 6725 / KCTC 15123 / Z-1320) (Anaerocellum thermophilum).